Here is a 378-residue protein sequence, read N- to C-terminus: MKYELQKTDGRARRGRLVFERGVVETPAFMPVGTYGTVKGMTPEEVKETGAQILLGNTFHLWLRPGQEIMKLHGDLHDFMQWHGPILTDSGGFQVFSLGAMRKIKEEGVTFQNPINGDKVFLSPEKSMEIQYDLGSDIVMIFDECTPYPADWDYAKRSMEMSLRWAKRSRDRFDELNNKNALFGIIQGGVYEDLRDVSVKGLVDIGFDGYAVGGLAVGEPKEDMHRILEHVCPQIPADKPRYLMGVGKPEDLVEGVRRGIDMFDCVMPTRNARNGHLFVTDGVVKIRNAKHKSDTATLDEHCDCYTCRNYSRAYLHHLDRCNEILGARLNTIHNLRYYQRLMASLRQAIEEGKLESFVEYFYGRIGKPVPPLSPQLTD.

Residue Asp89 is the Proton acceptor of the active site. Substrate-binding positions include 89–93 (DSGGF), Asp143, Gln187, and Gly214. Residues 245 to 251 (GVGKPED) are RNA binding. Asp264 acts as the Nucleophile in catalysis. Positions 269 to 273 (TRNAR) are RNA binding; important for wobble base 34 recognition. Positions 302, 304, 307, and 333 each coordinate Zn(2+).

The protein belongs to the queuine tRNA-ribosyltransferase family. As to quaternary structure, homodimer. Within each dimer, one monomer is responsible for RNA recognition and catalysis, while the other monomer binds to the replacement base PreQ1. The cofactor is Zn(2+).

It carries out the reaction 7-aminomethyl-7-carbaguanine + guanosine(34) in tRNA = 7-aminomethyl-7-carbaguanosine(34) in tRNA + guanine. It functions in the pathway tRNA modification; tRNA-queuosine biosynthesis. Functionally, catalyzes the base-exchange of a guanine (G) residue with the queuine precursor 7-aminomethyl-7-deazaguanine (PreQ1) at position 34 (anticodon wobble position) in tRNAs with GU(N) anticodons (tRNA-Asp, -Asn, -His and -Tyr). Catalysis occurs through a double-displacement mechanism. The nucleophile active site attacks the C1' of nucleotide 34 to detach the guanine base from the RNA, forming a covalent enzyme-RNA intermediate. The proton acceptor active site deprotonates the incoming PreQ1, allowing a nucleophilic attack on the C1' of the ribose to form the product. After dissociation, two additional enzymatic reactions on the tRNA convert PreQ1 to queuine (Q), resulting in the hypermodified nucleoside queuosine (7-(((4,5-cis-dihydroxy-2-cyclopenten-1-yl)amino)methyl)-7-deazaguanosine). The chain is Queuine tRNA-ribosyltransferase from Yersinia enterocolitica serotype O:8 / biotype 1B (strain NCTC 13174 / 8081).